Here is a 1044-residue protein sequence, read N- to C-terminus: MEPRLRVFELARELGVDSKRVLEVLQSLNVDVKNHMSTIDQKTAEKVTDAVRRTEAQEGQGAGKSAAKSAKPAAQPKPTREANPAKTSLLEDFFGSGTRPQRPLSEKRERRPLTERRPLAERRPLAERPLVDRPVTERPLAERPAAELRPGAAKAAAPARPAAEAQPVAERRAPAEAAQAAQAERRPAEKAQPAAAAKAAPPEKAGAAPVPGAVAEQKQAATPAAAEQKPAGKAEQTAGAAQAKPARAEAGTGASSRPASAAPAAQGEKRPAAAAERREEPQAEAPQTSGPSRPVPAGPGQPARPAGSGIGVPVKPAAGGKSGLGLPTRPGEKAADGARGGGSGIGLPVKPAAGQGTAARAGGLGLPQKPKAGAPRPGGGLGAPQRPGRRGAPLAIPKLDPKVAEQAKAGEGKPRYGQSGDKRRADLYDRREHPSSQPSEEKLFGQRPKRKASAQERRVLKPITVTGPMSVKDLAHEMGVTAAEVIKTLLTGFGIMATINQELDVDTCVLVASEFGVEATVEQKEDIIEVYDRVEDPDEPAELKKPRHPVVTIMGHVDHGKTSLLDAIRQAKVAAGEAGGITQHIGAYEVELNGRKITFLDTPGHEAFTAMRARGANVTDIAVLVVAADDSVMPQTVESINHAKAANVPILVAINKIDKPEANPQRVMQDLTQYGLVPEEWGGDTIMVPVSAKQKTNLDLLLENILVLAEVSDLKANPDKPAAGTILEAALDKARGPVATVLVQAGTLNTGDVFVAGTSWGRVRAMFDHRGRKLKSAGPSTPVRVLGFDSVPQAGDVFRVTPDEKTARAIAEKRIAKAQAERLAQKAISLDDFMNQVAQGEIKDLNVIVKADVQGSVEAIRGQLEKLRNEEVKVKVIHAGVGAISESDVMLAVASKAIIIGFNVRPDDRASRAADEHGIDVRTYSVIYDIVDDIEAAMKGMLKPKIEEVILGKAEVRETFKVPKVGMAAGCMVIQGKVTRNARYRLIRDGVVVWDGEINALRRFKDEVREVSEGYECGITLQNFHDFKRGDILEAYELQEIKAG.

The interval 55–458 is disordered; sequence EAQEGQGAGK…KRKASAQERR (404 aa). Positions 57 to 77 are enriched in low complexity; it reads QEGQGAGKSAAKSAKPAAQPK. The segment covering 104–146 has biased composition (basic and acidic residues); that stretch reads LSEKRERRPLTERRPLAERRPLAERPLVDRPVTERPLAERPAA. 3 stretches are compositionally biased toward low complexity: residues 147–168, 190–231, and 254–265; these read ELRP…AQPV, KAQP…QKPA, and ASSRPASAAPAA. Basic and acidic residues predominate over residues 267–281; it reads GEKRPAAAAERREEP. Low complexity-rich tracts occupy residues 352–375 and 383–395; these read AAGQ…AGAP and APQR…APLA. Over residues 399-444 the composition is skewed to basic and acidic residues; the sequence is LDPKVAEQAKAGEGKPRYGQSGDKRRADLYDRREHPSSQPSEEKLF. Residues 546 to 714 enclose the tr-type G domain; sequence PRHPVVTIMG…ILVLAEVSDL (169 aa). The interval 555–562 is G1; sequence GHVDHGKT. 555–562 serves as a coordination point for GTP; it reads GHVDHGKT. The segment at 580 to 584 is G2; the sequence is GITQH. Residues 601 to 604 are G3; that stretch reads DTPG. Residues 601–605 and 655–658 contribute to the GTP site; these read DTPGH and NKID. A G4 region spans residues 655–658; that stretch reads NKID. The segment at 691-693 is G5; that stretch reads SAK.

It belongs to the TRAFAC class translation factor GTPase superfamily. Classic translation factor GTPase family. IF-2 subfamily.

The protein localises to the cytoplasm. In terms of biological role, one of the essential components for the initiation of protein synthesis. Protects formylmethionyl-tRNA from spontaneous hydrolysis and promotes its binding to the 30S ribosomal subunits. Also involved in the hydrolysis of GTP during the formation of the 70S ribosomal complex. This is Translation initiation factor IF-2 from Symbiobacterium thermophilum (strain DSM 24528 / JCM 14929 / IAM 14863 / T).